Reading from the N-terminus, the 432-residue chain is MQVTVETKEGLERVLTITVPAANIEDAVSAELRNIAKNRRFDGFRKGKVPMKMVAKMYGQAVRNDVMGEVMQRHFIEAIVKEKINPAGAPTFTPVEFAEGKDLVFSASFEVYPEVALQGLDKVVVEKPQVEVKDEDVAEMLETLRKQQSTWADADIAAEDGTRATINFVGSIDGEEFEGGKAENFPLEMGQGRMIPGFEDGIKGKKAGDELTIDVNFPEEYHAENLKGKAAQFAIKVVKVEARELPELNDEFVAKFGAEGGVEGLKAEVRKNMERELAQAVKNKIKEQAINGLVEQNNIDVPSALIDQEVQVLRQQAVQRFGGNADTAPELPRELFEEQAKRRVVVGLLLGEVIKSEELKADDEKVKALINEMASAYEDPTEVVAYYEGNEQMMNNMRNVALEEQAVEAILAKAQVSEKAFGFNELMNQQPA.

Residues 161 to 246 enclose the PPIase FKBP-type domain; that stretch reads GTRATINFVG…VVKVEARELP (86 aa).

Belongs to the FKBP-type PPIase family. Tig subfamily.

The protein localises to the cytoplasm. The catalysed reaction is [protein]-peptidylproline (omega=180) = [protein]-peptidylproline (omega=0). Functionally, involved in protein export. Acts as a chaperone by maintaining the newly synthesized protein in an open conformation. Functions as a peptidyl-prolyl cis-trans isomerase. This chain is Trigger factor, found in Aliivibrio fischeri (strain MJ11) (Vibrio fischeri).